A 66-amino-acid chain; its full sequence is SPbeta prophage-derived uncharacterized protein YopM (66 aa).

The chain is SPbeta prophage-derived uncharacterized protein YopM (yopM) from Bacillus subtilis (strain 168).